A 420-amino-acid polypeptide reads, in one-letter code: Dynein axonemal assembly factor 4 (420 aa).

The CS domain occupies 3 to 87 (LQVSDYSWQQ…KEAAMWETLS (85 aa)). Residues 7–103 (DYSWQQTKTA…EMMQRIREKS (97 aa)) are mediates interaction with ESR1 and STUB1. TPR repeat units lie at residues 290 to 323 (PEWL…NNKM), 324 to 357 (PLLY…LMPP), and 366 to 399 (MKAH…DPSN).

In terms of assembly, interacts with ZMYND10. Interacts with STUB1. Interacts with ESR1 and ESR2. Interacts with DNAAF2. Interacts with CCT3, CCT4, CCT5 and CCT8. Interacts with DNAAF6/PIH1D3.

It localises to the nucleus. The protein localises to the cytoplasm. It is found in the cell projection. The protein resides in the neuron projection. Its subcellular location is the dynein axonemal particle. Its function is as follows. Involved in neuronal migration during development of the cerebral neocortex. May regulate the stability and proteasomal degradation of the estrogen receptors that play an important role in neuronal differentiation, survival and plasticity. Axonemal dynein assembly factor required for ciliary motility. This Pan paniscus (Pygmy chimpanzee) protein is Dynein axonemal assembly factor 4.